Here is a 595-residue protein sequence, read N- to C-terminus: GRB2-associated-binding protein 3 (595 aa).

The region spanning 5–117 is the PH domain; sequence DTVCMGWLIK…WVHSISQVCN (113 aa). Residues 295–339 form a disordered region; that stretch reads SGVKELNIMSNTPPPRPPKPSYLSEQRQDQPLLTGHSSNKKPGYT. Residues 317–331 show a composition bias toward polar residues; the sequence is LSEQRQDQPLLTGHS. A Phosphoserine modification is found at Ser-346. 2 disordered regions span residues 389–408 and 418–463; these read PSAEDSYVPMSPKGTASELR and PMSS…QEHT. The segment covering 454-463 has biased composition (polar residues); it reads RNLSTIQEHT. Ser-480 is subject to Phosphoserine. The tract at residues 493 to 513 is disordered; the sequence is STPSEEEEEEEEEEEEEEEEE. Over residues 496-513 the composition is skewed to acidic residues; it reads SEEEEEEEEEEEEEEEEE.

It belongs to the GAB family. Interacts with PIK3R/p85, SHP2 and GRAP2/MONA. May interact with Grb2. Post-translationally, phosphorylated on tyrosine residue(s) after macrophage colony-stimulating factor (M-CSF) receptor stimulation. In terms of tissue distribution, highly expressed in spleen and thymus and weakly in brain, heart, lung, kidney, uterus, and embryonic stem cells. Also expressed in myeloid and macrophage cell lines.

This Mus musculus (Mouse) protein is GRB2-associated-binding protein 3 (Gab3).